Reading from the N-terminus, the 338-residue chain is MASLMLNGAITFPKGLGSPGSNLHARSIPRPTLLSVTRTSTPRLSVATRCSSSSVSSSRPSAQPRFIQHKKEAYWFYRFLSIVYDHVINPGHWTEDMRDDALEPADLSHPDMRVVDVGGGTGFTTLGIVKTVKAKNVTILDQSPHQLAKAKQKEPLKECKIVEGDAEDLPFPTDYADRYVSAGSIEYWPDPQRGIREAYRVLKIGGKACLIGPVYPTFWLSRFFSDVWMLFPKEEEYIEWFKNAGFKDVQLKRIGPKWYRGVRRHGLIMGCSVTGVKPASGDSPLQLGPKEEDVEKPVNNPFSFLGRFLLGTLAAAWFVLIPIYMWIKDQIVPKDQPI.

The N-terminal 51 residues, 1–51, are a transit peptide targeting the chloroplast; it reads MASLMLNGAITFPKGLGSPGSNLHARSIPRPTLLSVTRTSTPRLSVATRCS. Residues 52–307 are Chloroplast intermembrane-facing; it reads SSSVSSSRPS…VNNPFSFLGR (256 aa). Positions 114–123 are SAM motif I; the sequence is VVDVGGGTGF. The interval 159–172 is SAM motif II; the sequence is CKIVEGDAEDLPFP. Positions 200-213 are SAM motif III; sequence RVLKIGGKACLIGP. A helical membrane pass occupies residues 308–328; the sequence is FLLGTLAAAWFVLIPIYMWIK. Residues 329–338 are Stromal-facing; sequence DQIVPKDQPI.

It belongs to the class I-like SAM-binding methyltransferase superfamily. MPBQ/MBSQ MT family.

It localises to the plastid. Its subcellular location is the chloroplast inner membrane. The enzyme catalyses 2-methyl-6-phytyl-1,4-benzene-1,4-diol + S-adenosyl-L-methionine = 2,3-dimethyl-6-phytylbenzene-1,4-diol + S-adenosyl-L-homocysteine + H(+). It catalyses the reaction 2-methyl-6-(all-trans-nonaprenyl)benzene-1,4-diol + S-adenosyl-L-methionine = plastoquinol-9 + S-adenosyl-L-homocysteine + H(+). The catalysed reaction is 6-geranylgeranyl-2-methylbenzene-1,4-diol + S-adenosyl-L-methionine = 6-geranylgeranyl-2,3-dimethylbenzene-1,4-diol + S-adenosyl-L-homocysteine + H(+). Its pathway is cofactor biosynthesis; tocopherol biosynthesis. Involved in a key methylation step in both tocopherols (vitamin E) and plastoquinone synthesis. Catalyzes the conversion of 2-methyl-6-phytyl-1,4-hydroquinone (MPBQ) to 2,3-dimethyl-6-phytyl-1,4-hydroquinone (DMPQ, a substrate for tocopherol cyclase), and 2-methyl-6-solanyl-1,4-benzoquinone (MSBQ) to plastoquinone. This chain is 2-methyl-6-phytyl-1,4-hydroquinone methyltransferase, chloroplastic (VTE3), found in Arabidopsis thaliana (Mouse-ear cress).